A 194-amino-acid polypeptide reads, in one-letter code: PRELI domain containing protein 3B (194 aa).

One can recognise a PRELI/MSF1 domain in the interval Met-1–Glu-172. 2 positions are modified to phosphoserine: Ser-46 and Ser-51.

Belongs to the slowmo family.

This is PRELI domain containing protein 3B (PRELID3B) from Bos taurus (Bovine).